Consider the following 792-residue polypeptide: Carboxysome assembly protein CsoS2 (792 aa).

Residues 1–15 are compositionally biased toward basic and acidic residues; the sequence is MAKQSSRELALERRK. The interval 1 to 235 is N-terminal domain; that stretch reads MAKQSSRELA…EISQRVRELR (235 aa). Disordered regions lie at residues 1 to 259, 280 to 299, and 338 to 359; these read MAKQ…RNGS, QVVT…NEAS, and HGNR…DEPG. The N-repeat 1 repeat unit spans residues 7–22; it reads RELALERRKALSNSGK. Polar residues-rich tracts occupy residues 17 to 36 and 69 to 82; these read LSNS…NRIR and DTSF…SGAS. An N-repeat 2 repeat occupies 94 to 109; it reads RELVLARRDELSRRGQ. Composition is skewed to basic and acidic residues over residues 97-106 and 113-126; these read VLARRDELSR and KSKD…EKIS. Residues 161–175 are compositionally biased toward polar residues; the sequence is DTVSRLSSRNSTSRP. N-repeat repeat units follow at residues 187 to 202 and 225 to 240; these read RALV…KHGK and REIS…KSGA. Basic and acidic residues predominate over residues 218–236; that stretch reads GDPDLSSREISQRVRELRS. Residues 240 to 615 are middle region; that stretch reads ATGKKRSGAC…VQACGSDAPA (376 aa). 6 M-repeat repeats span residues 270-319, 330-379, 388-427, 441-490, 500-549, and 560-609; these read KVGL…DTFC, KVAV…NQYC, KVGQ…GDQY, KVGS…NTFC, KVGL…SGWC, and RTPK…VQAC. Disordered stretches follow at residues 608 to 662 and 687 to 792; these read ACGS…GSQI and HFKS…GARG. A C-terminal domain region spans residues 616–792; the sequence is GSNDHQGSSE…LITVSGGARG (177 aa). Polar residues-rich tracts occupy residues 618–636 and 651–662; these read NDHQ…SVQS and VTGTSYEQGSQI. C-repeat repeat units follow at residues 633–678 and 703–738; these read SVQS…GTEQ and TRPE…EGAS. Residues 763-792 form a C-terminal peptide (CTP) region; that stretch reads EVSQPMSRVTGSSGNTDQGSLITVSGGARG. Over residues 764 to 785 the composition is skewed to polar residues; the sequence is VSQPMSRVTGSSGNTDQGSLIT.

Belongs to the CsoS2 family. As to quaternary structure, probably interacts with the carboxysome major shell protein CsoS1 via the N-terminal domain; this complex probably also interacts with RuBisCO. In terms of processing, has been suggested to undergo ribosomal frameshifting, as does its ortholog in H.neapolitanus. The exact position of the putative frameshift is not given, but it would probably occur in the sixth M-repeat and remove the C-terminus.

It localises to the carboxysome. In terms of biological role, required for alpha-carboxysome (Cb) assembly, mediates interaction between RuBisCO and the Cb shell. The protein is probably intrinsically disordered. The C-terminal repeats act as the encapsulation signal to target proteins to the Cb; they are necessary and sufficient to target both CsoS2 and foreign proteins to the Cb. The N-terminal repeats of this protein bind simultaneously to both subunits of RuBisCO. Probably also interacts with the major shell proteins (CsoS1); that interaction would increase the local concentration of CsoS2 so that it can condense RuBisCO and full carboxysomes can be formed. The sequence is that of Carboxysome assembly protein CsoS2 from Prochlorococcus marinus (strain MIT 9313).